Reading from the N-terminus, the 440-residue chain is UDP-N-acetylmuramoylalanine--D-glutamate ligase (440 aa).

Position 112 to 118 (112 to 118 (GSNGKST)) interacts with ATP.

Belongs to the MurCDEF family.

The protein resides in the cytoplasm. It catalyses the reaction UDP-N-acetyl-alpha-D-muramoyl-L-alanine + D-glutamate + ATP = UDP-N-acetyl-alpha-D-muramoyl-L-alanyl-D-glutamate + ADP + phosphate + H(+). Its pathway is cell wall biogenesis; peptidoglycan biosynthesis. Functionally, cell wall formation. Catalyzes the addition of glutamate to the nucleotide precursor UDP-N-acetylmuramoyl-L-alanine (UMA). The polypeptide is UDP-N-acetylmuramoylalanine--D-glutamate ligase (Blochmanniella pennsylvanica (strain BPEN)).